The chain runs to 395 residues: Putative 8-amino-7-oxononanoate synthase (395 aa).

Residue R23 participates in substrate binding. Residue 110–111 (GF) coordinates pyridoxal 5'-phosphate. H135 contributes to the substrate binding site. Residues S182, 207–210 (DEAH), and 239–242 (TFSK) contribute to the pyridoxal 5'-phosphate site. At K242 the chain carries N6-(pyridoxal phosphate)lysine. T356 provides a ligand contact to substrate.

This sequence belongs to the class-II pyridoxal-phosphate-dependent aminotransferase family. BioF subfamily. In terms of assembly, homodimer. Pyridoxal 5'-phosphate serves as cofactor.

It catalyses the reaction 6-carboxyhexanoyl-[ACP] + L-alanine + H(+) = (8S)-8-amino-7-oxononanoate + holo-[ACP] + CO2. It functions in the pathway cofactor biosynthesis; biotin biosynthesis. Catalyzes the decarboxylative condensation of pimeloyl-[acyl-carrier protein] and L-alanine to produce 8-amino-7-oxononanoate (AON), [acyl-carrier protein], and carbon dioxide. This is Putative 8-amino-7-oxononanoate synthase (bioF) from Bacillus anthracis.